The chain runs to 220 residues: Small ribosomal subunit protein eS1 (220 aa).

This sequence belongs to the eukaryotic ribosomal protein eS1 family.

The protein is Small ribosomal subunit protein eS1 of Pyrobaculum arsenaticum (strain DSM 13514 / JCM 11321 / PZ6).